We begin with the raw amino-acid sequence, 330 residues long: MTAEIAVLGGGAWGTALAQMLASDGQDVLLWARESEVVAEVNADHLNSIYLPGARLAENIKATGEVSDLSAIPTLLVVTPAQHMGAVLKTLPENPRDLVLCSKGIEQDTGRLMNDVAAEACPDSEIAILSGPTFAHEVAAGLPTAVTLACSSREQWERLKPLIARPAFRPYYSDDVSGAEIGGAVKNVLAIACGVVDGLGLGQNARAALIARGYAEMLRFGEALGAQAETLAGLCGLGDLVLTCSSTSSRNFSLGKALGEGRTAADLMADRTTVAEGAYTAPVLAELAEAKGVDMPIVQAVNRIIAGADAQAVVAQLLARPLRAEHESDA.

3 residues coordinate NADPH: W13, R33, and K103. Residues K103, G131, and T133 each coordinate sn-glycerol 3-phosphate. NADPH is bound at residue A135. Sn-glycerol 3-phosphate is bound by residues K186, D239, S249, R250, and N251. The active-site Proton acceptor is the K186. R250 serves as a coordination point for NADPH. The NADPH site is built by V274 and E276.

It belongs to the NAD-dependent glycerol-3-phosphate dehydrogenase family.

It localises to the cytoplasm. The enzyme catalyses sn-glycerol 3-phosphate + NAD(+) = dihydroxyacetone phosphate + NADH + H(+). It carries out the reaction sn-glycerol 3-phosphate + NADP(+) = dihydroxyacetone phosphate + NADPH + H(+). Its pathway is membrane lipid metabolism; glycerophospholipid metabolism. Its function is as follows. Catalyzes the reduction of the glycolytic intermediate dihydroxyacetone phosphate (DHAP) to sn-glycerol 3-phosphate (G3P), the key precursor for phospholipid synthesis. The sequence is that of Glycerol-3-phosphate dehydrogenase [NAD(P)+] from Erythrobacter litoralis (strain HTCC2594).